Reading from the N-terminus, the 173-residue chain is MALRSVKTPTLITSVAVVSSSVTNKPHSIRFSLKPTSALVVHNHQLSFYGSNLKLKPTKFRCSASALTPQLKDTLEKLVNSEKVVLFMKGTRDFPMCGFSNTVVQILKNLNVPFEDVNILENEMLRQGLKEYSNWPTFPQLYIGGEFFGGCDITLEAFKTGELQEEVEKAMCS.

The N-terminal 63 residues, 1-63 (MALRSVKTPT…KLKPTKFRCS (63 aa)), are a transit peptide targeting the chloroplast. The Glutaredoxin domain maps to 72-173 (KDTLEKLVNS…QEEVEKAMCS (102 aa)). Lysine 89 is a binding site for glutathione. [2Fe-2S] cluster is bound by residues cysteine 97 and phenylalanine 99. Cysteine 97 is subject to S-glutathionyl cysteine. A required for CAX1 activation region spans residues 97–100 (CGFS). The glutathione site is built by arginine 126 and lysine 130. The segment at 133–137 (SNWPT) is required for CAX1 activation. Glutathione-binding positions include phenylalanine 138 and 151 to 152 (CD).

This sequence belongs to the glutaredoxin family. CGFS subfamily. In terms of assembly, [2Fe-2S]-bridged holo-homodimer. Interacts with N-terminal part of CAX1 in yeast. Interacts in vitro with SUFE1, BOLA1, BOLA2 and BOLA4. Interacts in vivo only with SUFE1, BOLA1 and BOLA4. Interacts with SBP1. In terms of tissue distribution, highly expressed in leaves, at intermediate levels in stems and at lower levels in roots and flowers.

It localises to the plastid. The protein resides in the chloroplast. In terms of biological role, may only reduce GSH-thiol disulfides, but not protein disulfides (Potential). Probably involved in the regulation of the redox state of the BOLA proteins (Potential). May act as Fe-S cluster donors to Fe-S cluster-requiring proteins. May protect cells against protein oxidative damage. May regulate CAX cation transporters. The GRXS14-BOLA1 heterodimer binds a labile, oxygen sensitive Fe-S cluster. The protein is Monothiol glutaredoxin-S14, chloroplastic of Arabidopsis thaliana (Mouse-ear cress).